We begin with the raw amino-acid sequence, 482 residues long: DNA polymerase II small subunit (482 aa).

It belongs to the DNA polymerase delta/II small subunit family. Heterodimer of a large subunit and a small subunit.

The enzyme catalyses DNA(n) + a 2'-deoxyribonucleoside 5'-triphosphate = DNA(n+1) + diphosphate. The catalysed reaction is Exonucleolytic cleavage in the 3'- to 5'-direction to yield nucleoside 5'-phosphates.. Possesses two activities: a DNA synthesis (polymerase) and an exonucleolytic activity that degrades single-stranded DNA in the 3' to 5' direction. Has a template-primer preference which is characteristic of a replicative DNA polymerase. This chain is DNA polymerase II small subunit (polB), found in Methanothermobacter thermautotrophicus (strain ATCC 29096 / DSM 1053 / JCM 10044 / NBRC 100330 / Delta H) (Methanobacterium thermoautotrophicum).